The chain runs to 529 residues: uncharacterized protein (529 aa).

The region spanning Q13–R129 is the Arf-GAP domain. A C4-type zinc finger spans residues C28–C51. Positions Q291 to T301 are enriched in basic and acidic residues. Disordered stretches follow at residues Q291–G313, V335–Y357, K398–P424, and F468–K493. Over residues S399 to A420 the composition is skewed to low complexity. Polar residues predominate over residues N476 to P487.

Its function is as follows. GTPase-activating protein for the ADP ribosylation factor family. This is an uncharacterized protein from Caenorhabditis elegans.